A 383-amino-acid polypeptide reads, in one-letter code: Delta(12) fatty acid desaturase FAD2 (383 aa).

A disordered region spans residues 1–29 (MGAGGRMQDPTNGGNKTEPEPIQRVPHEK). Positions 17-29 (TEPEPIQRVPHEK) are enriched in basic and acidic residues. The next 2 membrane-spanning stretches (helical) occupy residues 50–70 (VIRSFSYVFYDLTIASILYYI) and 85–105 (VAWPVYWAVQGCVLTGVWVIA). The Histidine box-1 motif lies at 106-110 (HECGH). A helical transmembrane segment spans residues 118-138 (WLDDTVGLVLHSFLLVPYFSW). Residues 142-146 (HRRHH) carry the Histidine box-2 motif. 3 helical membrane passes run 180 to 200 (ILTLLVTLTLGWPLYLTFNVS), 226 to 246 (IFISDAGILAVVFVLFRLAMT), and 252 to 272 (VLTMYGGPLLVVNGFLVLITF). Residues 316–320 (HVAHH) carry the Histidine box-3 motif.

This sequence belongs to the fatty acid desaturase type 1 family. Expressed in leaves, flower buds and developing seeds.

The protein resides in the membrane. The protein operates within lipid metabolism; polyunsaturated fatty acid biosynthesis. Its function is as follows. Catalyzes the desaturation of oleic acid to linoleic acid. Introduces a double bond at position 12 of 16:1(9Z) and 18:1(9Z). This is Delta(12) fatty acid desaturase FAD2 from Calendula officinalis (Pot marigold).